The following is a 589-amino-acid chain: Proline--tRNA ligase (589 aa).

The protein belongs to the class-II aminoacyl-tRNA synthetase family. ProS type 1 subfamily. As to quaternary structure, homodimer.

Its subcellular location is the cytoplasm. It carries out the reaction tRNA(Pro) + L-proline + ATP = L-prolyl-tRNA(Pro) + AMP + diphosphate. Its function is as follows. Catalyzes the attachment of proline to tRNA(Pro) in a two-step reaction: proline is first activated by ATP to form Pro-AMP and then transferred to the acceptor end of tRNA(Pro). As ProRS can inadvertently accommodate and process non-cognate amino acids such as alanine and cysteine, to avoid such errors it has two additional distinct editing activities against alanine. One activity is designated as 'pretransfer' editing and involves the tRNA(Pro)-independent hydrolysis of activated Ala-AMP. The other activity is designated 'posttransfer' editing and involves deacylation of mischarged Ala-tRNA(Pro). The misacylated Cys-tRNA(Pro) is not edited by ProRS. The chain is Proline--tRNA ligase from Corynebacterium aurimucosum (strain ATCC 700975 / DSM 44827 / CIP 107346 / CN-1) (Corynebacterium nigricans).